Here is a 463-residue protein sequence, read N- to C-terminus: Glycine--tRNA ligase (463 aa).

2 residues coordinate substrate: R98 and E174. Residues 206 to 208 (RNE), 216 to 221 (FRTREF), 290 to 291 (EL), and 334 to 337 (GADR) each bind ATP. 221 to 225 (FEQME) provides a ligand contact to substrate. 330–334 (EPSLG) provides a ligand contact to substrate.

Belongs to the class-II aminoacyl-tRNA synthetase family. As to quaternary structure, homodimer.

It is found in the cytoplasm. The catalysed reaction is tRNA(Gly) + glycine + ATP = glycyl-tRNA(Gly) + AMP + diphosphate. Catalyzes the attachment of glycine to tRNA(Gly). The sequence is that of Glycine--tRNA ligase from Staphylococcus epidermidis (strain ATCC 35984 / DSM 28319 / BCRC 17069 / CCUG 31568 / BM 3577 / RP62A).